Here is a 122-residue protein sequence, read N- to C-terminus: Large ribosomal subunit protein uL14 (122 aa).

This sequence belongs to the universal ribosomal protein uL14 family. In terms of assembly, part of the 50S ribosomal subunit. Forms a cluster with proteins L3 and L19. In the 70S ribosome, L14 and L19 interact and together make contacts with the 16S rRNA in bridges B5 and B8.

Binds to 23S rRNA. Forms part of two intersubunit bridges in the 70S ribosome. This is Large ribosomal subunit protein uL14 from Campylobacter concisus (strain 13826).